The primary structure comprises 508 residues: Galactose-1-phosphate uridylyltransferase (508 aa).

Belongs to the galactose-1-phosphate uridylyltransferase type 2 family.

The protein resides in the cytoplasm. It catalyses the reaction alpha-D-galactose 1-phosphate + UDP-alpha-D-glucose = alpha-D-glucose 1-phosphate + UDP-alpha-D-galactose. Its pathway is carbohydrate metabolism; galactose metabolism. This is Galactose-1-phosphate uridylyltransferase (galT) from Halalkalibacterium halodurans (strain ATCC BAA-125 / DSM 18197 / FERM 7344 / JCM 9153 / C-125) (Bacillus halodurans).